The primary structure comprises 159 residues: Ubiquitin-conjugating enzyme E2 variant 1B (159 aa).

The UBC core domain occupies 11–159; it reads PRNFRLLEEL…KGLVVKCCVM (149 aa).

Belongs to the ubiquitin-conjugating enzyme family. In terms of assembly, heterodimer with UBC35 or UBC36. Expressed in roots, shoots, leaves, stems and flowers, but not in pollen.

Functionally, has no ubiquitin ligase activity on its own. The heterodimer with UBC catalyzes the synthesis of non-canonical poly-ubiquitin chains that are linked through 'Lys-63'. This type of poly-ubiquitination does not lead to protein degradation by the proteasome. Mediates transcriptional activation of target genes. May play a role in the control of progress through the cell cycle and differentiation. May play a role in the error-free DNA repair pathway and contributes to the survival of cells after DNA damage. The chain is Ubiquitin-conjugating enzyme E2 variant 1B (UEV1B) from Arabidopsis thaliana (Mouse-ear cress).